A 5141-amino-acid chain; its full sequence is SCO-spondin (5141 aa).

The N-terminal stretch at 1 to 17 is a signal peptide; sequence MLLPALLFGMLWAPANG. In terms of domain architecture, EMI spans 18-102; it reads HWCEQIETVH…ACCPGWGGIH (85 aa). Asn-88, Asn-130, Asn-150, and Asn-167 each carry an N-linked (GlcNAc...) asparagine glycan. Residues 193–364 form the VWFD 1 domain; the sequence is ATCATWSGFH…RLPGYEPGCL (172 aa). Cystine bridges form between Cys-195–Cys-325, Cys-217–Cys-363, and Cys-239–Cys-245. Positions 472-527 constitute a TIL 1 domain; sequence CPGGQLYSDCISSCPPSCSAVAQGEEGSCGKECVSGCECPTGLFWDGALCVPAAHC. One can recognise a VWFD 2 domain in the interval 565–738; that stretch reads AECAVGGDGH…FQVSGDGRCP (174 aa). Disulfide bonds link Cys-567-Cys-700 and Cys-591-Cys-737. Asn-657 and Asn-822 each carry an N-linked (GlcNAc...) asparagine glycan. Residues 830 to 883 form the TIL 2 domain; the sequence is CPGGQVYQECAPACGHYCGEPEDCKELGSCVAGCNCPPGLLWDLEGQCVPPSMC. 3 N-linked (GlcNAc...) asparagine glycosylation sites follow: Asn-895, Asn-949, and Asn-991. Residues 1017-1187 form the VWFD 3 domain; the sequence is GWCQASGAPH…HSWRLNPLCP (171 aa). 3 disulfides stabilise this stretch: Cys-1019–Cys-1151, Cys-1041–Cys-1186, and Cys-1062–Cys-1069. Residues 1280 to 1336 enclose the TIL 3 domain; the sequence is CEGGQVYEPCGSTCPPTCHDHHPELRWHCQAITCVEGCFCPEGTLLHGGTCVELTDC. Asn-1357 carries N-linked (GlcNAc...) asparagine glycosylation. LDL-receptor class A domains lie at 1380–1417, 1420–1456, 1456–1492, and 1496–1534; these read GCAEGEALCRESGHCVPLEWLCDNQDDCGDGSDEEGCD, VCGEGQMSCQSGRCLPLSLICDGQDDCGDGTDEQGCL, LCPQGFLACADGRCLPPALLCDGHPDCLDAADEESCL, and SCTSGEVSCVDGPCIRTIQLCDGVWDCPDGADEGPVHCS. Intrachain disulfides connect Cys-1381–Cys-1394, Cys-1388–Cys-1407, Cys-1401–Cys-1416, Cys-1421–Cys-1433, Cys-1428–Cys-1446, Cys-1440–Cys-1455, Cys-1457–Cys-1469, Cys-1464–Cys-1482, Cys-1476–Cys-1491, Cys-1497–Cys-1509, Cys-1504–Cys-1522, and Cys-1516–Cys-1533. The tract at residues 1533–1567 is disordered; that stretch reads CSSPSLPTPPAGIGQNPSTSSPDTSPSPVGSASPA. Residues 1549 to 1567 show a composition bias toward low complexity; the sequence is PSTSSPDTSPSPVGSASPA. 2 consecutive LDL-receptor class A domains span residues 1569-1605 and 1607-1646; these read PCSLSEFQCNSGECTPRGWRCDREEDCTDGSDELDCG and PCKLYQMPCAHGPHCLSPGQLCDGVAQCPDGSDEDPDVCE. Cystine bridges form between Cys-1570-Cys-1582, Cys-1577-Cys-1595, Cys-1589-Cys-1604, Cys-1608-Cys-1621, Cys-1615-Cys-1634, and Cys-1628-Cys-1645. N-linked (GlcNAc...) asparagine glycans are attached at residues Asn-1655 and Asn-1668. The region spanning 1660–1700 is the LDL-receptor class A 7 domain; that stretch reads PCPEFSCPNGTCIDFLLVCDGSPDCELADETEPSLDEQGCG. Disulfide bonds link Cys-1661–Cys-1671, Cys-1666–Cys-1684, Cys-1678–Cys-1699, Cys-1711–Cys-1747, Cys-1715–Cys-1752, Cys-1726–Cys-1737, Cys-1767–Cys-1964, Cys-1771–Cys-1969, and Cys-1781–Cys-1791. 2 TSP type-1 domains span residues 1699–1753 and 1755–1970; these read CGTW…EACP and DGEW…EPCE. N-linked (GlcNAc...) asparagine glycosylation occurs at Asn-1725. Asn-1814 carries N-linked (GlcNAc...) asparagine glycosylation. EGF-like domains lie at 1829-1868 and 1869-1895; these read CPLTCDDISGEAVCSPDRPCSSPGCWCPEGKVLGTEGRCV and RPRQCPCLVDGIRYWPGQRIKMDCQLC. In terms of domain architecture, VWFC 1 spans 1970 to 2030; that stretch reads EGCEQWGLTY…GMGESCCHCA (61 aa). Residue Asn-2035 is glycosylated (N-linked (GlcNAc...) asparagine). Disulfide bonds link Cys-2070–Cys-2226, Cys-2236–Cys-2248, Cys-2243–Cys-2261, and Cys-2255–Cys-2270. Residues 2070-2226 form the F5/8 type C domain; it reads CYSPLGLAGL…IFLWVELLGC (157 aa). The disordered stretch occupies residues 2087 to 2109; that stretch reads PLEHSTRAAPVEAPTAGPGPRED. N-linked (GlcNAc...) asparagine glycosylation is found at Asn-2130 and Asn-2148. One can recognise an LDL-receptor class A 8 domain in the interval 2235-2271; it reads LCPGTRHRCANGDCALKGGPCDGAVDCEDGSDEEGCG. A disordered region spans residues 2262–2335; that stretch reads EDGSDEEGCG…SPSASEGLLP (74 aa). A compositionally biased stretch (polar residues) spans 2276–2294; that stretch reads STASRVHSTARTPALSPTQ. Positions 2301-2314 are enriched in basic and acidic residues; sequence HPREGLADMEHQQP. LDL-receptor class A domains are found at residues 2391–2427 and 2448–2484; these read RCGPGQVPCDVLGCVEQEQLCDGREDCLDGSDEQHCA and LCSPSQLSCGSGECLPLEHRCDLQVNCQDGSDEDDCV. 12 cysteine pairs are disulfide-bonded: Cys-2392–Cys-2404, Cys-2399–Cys-2417, Cys-2411–Cys-2426, Cys-2449–Cys-2461, Cys-2456–Cys-2474, Cys-2468–Cys-2483, Cys-2486–Cys-2522, Cys-2497–Cys-2501, Cys-2532–Cys-2537, Cys-2552–Cys-2589, Cys-2556–Cys-2594, and Cys-2567–Cys-2579. 2 consecutive TSP type-1 domains span residues 2485 to 2538 and 2540 to 2595; these read DCVL…QACP and AGAW…QLCP. Residues 2618–2660 form the TIL 4 domain; it reads PPCPPSCLDPEANRSCSGHCVEGCRCPPGLFLQDSHCLPLSEC. N-linked (GlcNAc...) asparagine glycans are attached at residues Asn-2630 and Asn-2679. TSP type-1 domains lie at 2700 to 2754, 2758 to 2813, and 2815 to 2868; these read SCGW…TDCG, PGWT…SLCP, and PSAW…HPCT. Disulfide bonds link Cys-2701/Cys-2739, Cys-2712/Cys-2716, Cys-2749/Cys-2753, Cys-2769/Cys-2807, Cys-2773/Cys-2812, Cys-2789/Cys-2797, Cys-2827/Cys-2862, Cys-2831/Cys-2867, and Cys-2842/Cys-2852. 2 N-linked (GlcNAc...) asparagine glycosylation sites follow: Asn-2921 and Asn-2951. TSP type-1 domains lie at 2969-3024 and 3025-3068; these read ACGW…RPCQ and GPGA…QPCA. Intrachain disulfides connect Cys-2970–Cys-3008, Cys-2981–Cys-2985, and Cys-3018–Cys-3023. N-linked (GlcNAc...) asparagine glycosylation is found at Asn-3046, Asn-3101, Asn-3148, and Asn-3158. The 53-residue stretch at 3075–3127 folds into the TIL 5 domain; that stretch reads CPKDQQWLDCAQGPASCAHLSTPREANQTCHPGCYCLSGMLLLNNVCVPAQDC. 2 TSP type-1 domains span residues 3168 to 3235 and 3237 to 3292; these read QPAW…PGCN and AGVW…QPCP. 6 disulfides stabilise this stretch: Cys-3180–Cys-3229, Cys-3184–Cys-3234, Cys-3195–Cys-3219, Cys-3249–Cys-3286, Cys-3253–Cys-3291, and Cys-3264–Cys-3276. Asn-3295 carries an N-linked (GlcNAc...) asparagine glycan. In terms of domain architecture, TIL 6 spans 3300–3350; sequence EGAEYSPCGPPCPRSCDDLVHCMWHCQPGCYCPPGKVLSADGAICVQPHHC. N-linked (GlcNAc...) asparagine glycosylation is present at Asn-3384. 2 consecutive TSP type-1 domains span residues 3393-3455 and 3457-3512; these read SGDW…TACP and DGAW…TPCT. Disulfide bonds link Cys-3405/Cys-3448, Cys-3409/Cys-3454, Cys-3420/Cys-3432, Cys-3469/Cys-3504, Cys-3472/Cys-3511, and Cys-3482/Cys-3494. Residue Asn-3506 is glycosylated (N-linked (GlcNAc...) asparagine). Residues 3514 to 3570 enclose the TIL 7 domain; the sequence is CGGGQDLLPCGQPCPHSCQDLSLGSTCQPGSSGCQSGCGCPPGQLSQDGLCVFPADC. 2 N-linked (GlcNAc...) asparagine glycosylation sites follow: Asn-3584 and Asn-3611. A TSP type-1 14 domain is found at 3630-3678; that stretch reads PGIWSSWGPWEKCSVPCGGGEQLRSRQCARPPCPGLAQQSRTCHIHVCR. Intrachain disulfides connect Cys-3642–Cys-3672, Cys-3646–Cys-3677, and Cys-3657–Cys-3662. Asn-3787 carries N-linked (GlcNAc...) asparagine glycosylation. TSP type-1 domains lie at 3806–3862, 3876–3928, 3942–3998, and 4000–4055; these read RGYF…PECP, AGGW…PSCT, NCFW…RACP, and PGGW…MPCE. 3 disulfides stabilise this stretch: Cys-3818–Cys-3856, Cys-3822–Cys-3861, and Cys-3834–Cys-3846. N-linked (GlcNAc...) asparagine glycosylation occurs at Asn-3910. 6 disulfides stabilise this stretch: Cys-3943/Cys-3979, Cys-3954/Cys-3958, Cys-3992/Cys-3997, Cys-4012/Cys-4049, Cys-4016/Cys-4054, and Cys-4027/Cys-4039. In terms of domain architecture, TIL 8 spans 4058 to 4113; the sequence is CPAGMEMVSCANRCPYSCSDLQEAVMCQEDQACQLGCRCSEGFLEQDGGCVPVGHC. N-linked (GlcNAc...) asparagine glycosylation is present at Asn-4135. TSP type-1 domains lie at 4155–4208, 4249–4304, 4306–4362, and 4364–4418; these read HCAW…DPCP, PGGW…QLCL, LLEI…GPCQ, and DCMW…GNCS. Disulfide bonds link Cys-4156–Cys-4192, Cys-4167–Cys-4171, Cys-4202–Cys-4207, Cys-4261–Cys-4298, Cys-4265–Cys-4303, and Cys-4276–Cys-4288. Asn-4345 carries N-linked (GlcNAc...) asparagine glycosylation. 3 disulfides stabilise this stretch: Cys-4365-Cys-4402, Cys-4376-Cys-4378, and Cys-4412-Cys-4417. Asn-4416 carries N-linked (GlcNAc...) asparagine glycosylation. In terms of domain architecture, TIL 9 spans 4422–4477; it reads CLPPFEFQSCGSPCAGLCATHLSHQLCQDLPPCQPGCYCPMGLLEQDGGCILPEQC. A glycan (N-linked (GlcNAc...) asparagine) is linked at Asn-4557. The region spanning 4608 to 4659 is the TSP type-1 23 domain; that stretch reads TCQWGPWGPWSPCQVPCSGGFKLRWREASDNSVGECRGPWAQTESCNMGSCP. 3 disulfide bridges follow: Cys-4609–Cys-4643, Cys-4620–Cys-4624, and Cys-4653–Cys-4658. The TIL 10 domain maps to 4673–4719; it reads DCANQCPRSCADLWEGVQCLQGPCSPGCRCPPGQLVQDGHCVPISSC. Asn-4727, Asn-4744, and Asn-4749 each carry an N-linked (GlcNAc...) asparagine glycan. The 54-residue stretch at 4759–4812 folds into the TSP type-1 24 domain; the sequence is CPVLGPWSPWSECSAVCGGGTMVRYRSCEEHPDSAPCQALDMEQRVECNLQTCP. 3 cysteine pairs are disulfide-bonded: Cys-4771-Cys-4806, Cys-4775-Cys-4811, and Cys-4786-Cys-4795. The TIL 11 domain maps to 4814–4868; sequence CPPGQVLSTCATLCPSFCSHLWPGTICVREPCQLGCGCPGGQLLHSGTCIPPEAC. N-linked (GlcNAc...) asparagine glycosylation is found at Asn-4899, Asn-4942, and Asn-4949. Positions 4920–4978 constitute a TIL 12 domain; it reads CPPGEILQLGELRPCEKTCLEMNKTQAWSNCTEAQVPGCVCQLGHFRSHTGLCVPEDHC. The region spanning 4978-5036 is the VWFC 2 domain; that stretch reads CECWHHGSPHLPGSEWQEACESCRCLHGKSVCTQHCPELSCAQGEVVVQEPGSCCPICQ. Disulfide bonds link Cys-5047–Cys-5095, Cys-5061–Cys-5112, Cys-5071–Cys-5128, and Cys-5075–Cys-5130. The region spanning 5047–5134 is the CTCK domain; it reads CRHLTELRNL…IHNCHCSACQ (88 aa). An N-linked (GlcNAc...) asparagine glycan is attached at Asn-5055.

It belongs to the thrombospondin family.

The protein localises to the secreted. It is found in the extracellular space. In terms of biological role, involved in the modulation of neuronal aggregation. May be involved in developmental events during the formation of the central nervous system. The sequence is that of SCO-spondin from Rattus norvegicus (Rat).